We begin with the raw amino-acid sequence, 109 residues long: SRA stem-loop-interacting RNA-binding protein, mitochondrial (109 aa).

Ser15 bears the Phosphoserine mark. The RRM domain maps to 19 to 103 (PVAFVRRIPW…RRPKLPQTSD (85 aa)). Thr101 bears the Phosphothreonine mark. Phosphoserine is present on Ser102.

The protein resides in the mitochondrion. It localises to the nucleus. Functionally, RNA-binding protein that acts as a nuclear receptor corepressor. Probably acts by binding the SRA RNA, and repressing the SRA-mediated nuclear receptor coactivation. Binds the STR7 loop of SRA RNA. Also able to repress glucocorticoid (GR), androgen (AR), thyroid (TR) and VDR-mediated transactivation. The chain is SRA stem-loop-interacting RNA-binding protein, mitochondrial (SLIRP) from Pongo abelii (Sumatran orangutan).